We begin with the raw amino-acid sequence, 326 residues long: Olfactory receptor 10X1 (326 aa).

At 1 to 41 (MVLNVYCCFFQISDIQTMKINQTILKEFILVGFSVYPHVQT) the chain is on the extracellular side. N-linked (GlcNAc...) asparagine glycosylation is present at N21. A helical transmembrane segment spans residues 42 to 62 (FLFVVFFCLYLLTLAGNLIIM). At 63–70 (GLTWVDRS) the chain is on the cytoplasmic side. The chain crosses the membrane as a helical span at residues 71–91 (LHTPMYLFLSALSFSETCYTL). Residues 92–115 (TIVPKMLEDLLAKDRSISVTGCSL) are Extracellular-facing. Cysteines 113 and 205 form a disulfide. A helical membrane pass occupies residues 116 to 136 (QMCFFLGLGGTNCIILTLMGY). The Cytoplasmic segment spans residues 137-155 (DRFLAICNPLRYPLLMTNI). A helical membrane pass occupies residues 156–176 (VCGQLVASACTAGFFISLTET). Over 177–213 (ALIFRDSFCRPNLVKHFFCHMLAVIRLSCIDSNHTEF) the chain is Extracellular. Residue N209 is glycosylated (N-linked (GlcNAc...) asparagine). A helical membrane pass occupies residues 214–233 (IITLISVSGLLGTLLLIILT). Over 234-253 (DVFIISTVLRIPSAEGKQKA) the chain is Cytoplasmic. Residues 254-274 (FTTCASHLTVVIIHFGFASIV) form a helical membrane-spanning segment. Over 275–284 (YLKPEASGDD) the chain is Extracellular. The helical transmembrane segment at 285-305 (TLIAVPYTVITPFLSPIIFSL) threads the bilayer. At 306-326 (RNKDMKNAFRRMMGNTVALKK) the chain is on the cytoplasmic side.

This sequence belongs to the G-protein coupled receptor 1 family.

Its subcellular location is the cell membrane. Functionally, odorant receptor. This is Olfactory receptor 10X1 (OR10X1) from Homo sapiens (Human).